The primary structure comprises 379 residues: Glutamate 5-kinase (379 aa).

Lys-14 serves as a coordination point for ATP. The substrate site is built by Ser-54, Asp-141, and Asn-153. ATP contacts are provided by residues 173–174 (TD) and 215–221 (TGGMATK). The region spanning 280–358 (KGRLLLDIGA…DEIEPLLGYD (79 aa)) is the PUA domain.

Belongs to the glutamate 5-kinase family.

It localises to the cytoplasm. The catalysed reaction is L-glutamate + ATP = L-glutamyl 5-phosphate + ADP. It participates in amino-acid biosynthesis; L-proline biosynthesis; L-glutamate 5-semialdehyde from L-glutamate: step 1/2. Catalyzes the transfer of a phosphate group to glutamate to form L-glutamate 5-phosphate. The chain is Glutamate 5-kinase from Shewanella amazonensis (strain ATCC BAA-1098 / SB2B).